The chain runs to 465 residues: Siroheme synthase (465 aa).

The precorrin-2 dehydrogenase /sirohydrochlorin ferrochelatase stretch occupies residues 1–203 (MDFLPLFHSL…GRPAEAERLL (203 aa)). Residues 22 to 23 (EV) and 43 to 44 (PQ) each bind NAD(+). Ser128 carries the post-translational modification Phosphoserine. The tract at residues 217–465 (GEVYLVGAGP…AWFEGAREDA (249 aa)) is uroporphyrinogen-III C-methyltransferase. S-adenosyl-L-methionine is bound at residue Pro226. Catalysis depends on Asp249, which acts as the Proton acceptor. The active-site Proton donor is Lys271. S-adenosyl-L-methionine is bound by residues 302-304 (GGD), Ile307, 332-333 (TA), Met384, and Gly413.

This sequence in the N-terminal section; belongs to the precorrin-2 dehydrogenase / sirohydrochlorin ferrochelatase family. In the C-terminal section; belongs to the precorrin methyltransferase family.

The catalysed reaction is uroporphyrinogen III + 2 S-adenosyl-L-methionine = precorrin-2 + 2 S-adenosyl-L-homocysteine + H(+). The enzyme catalyses precorrin-2 + NAD(+) = sirohydrochlorin + NADH + 2 H(+). It carries out the reaction siroheme + 2 H(+) = sirohydrochlorin + Fe(2+). It participates in cofactor biosynthesis; adenosylcobalamin biosynthesis; precorrin-2 from uroporphyrinogen III: step 1/1. Its pathway is cofactor biosynthesis; adenosylcobalamin biosynthesis; sirohydrochlorin from precorrin-2: step 1/1. It functions in the pathway porphyrin-containing compound metabolism; siroheme biosynthesis; precorrin-2 from uroporphyrinogen III: step 1/1. The protein operates within porphyrin-containing compound metabolism; siroheme biosynthesis; siroheme from sirohydrochlorin: step 1/1. It participates in porphyrin-containing compound metabolism; siroheme biosynthesis; sirohydrochlorin from precorrin-2: step 1/1. Functionally, multifunctional enzyme that catalyzes the SAM-dependent methylations of uroporphyrinogen III at position C-2 and C-7 to form precorrin-2 via precorrin-1. Then it catalyzes the NAD-dependent ring dehydrogenation of precorrin-2 to yield sirohydrochlorin. Finally, it catalyzes the ferrochelation of sirohydrochlorin to yield siroheme. The chain is Siroheme synthase from Pseudomonas aeruginosa (strain ATCC 15692 / DSM 22644 / CIP 104116 / JCM 14847 / LMG 12228 / 1C / PRS 101 / PAO1).